A 393-amino-acid polypeptide reads, in one-letter code: Ceramide synthase 4 (393 aa).

The Lumenal segment spans residues 1–31; the sequence is MWSSLNDWLWNERLWLPANISWAQLEDHDGL. N19 carries an N-linked (GlcNAc...) asparagine glycan. A helical transmembrane segment spans residues 32-52; that stretch reads VFPHPQDTLMAVPLALALVVV. Residues 67-128 form a homeobox-like region; the sequence is WLGVRNQIRR…RRRRNQDRPC (62 aa). In terms of domain architecture, TLC spans 131-332; that stretch reads KKFCESSWKF…ILCMIYSFIK (202 aa). 4 consecutive transmembrane segments (helical) span residues 140-160, 179-199, 209-229, and 260-280; these read FVFY…ESWL, LYHW…TLPF, QVIH…LNLL, and MCDT…LVLF. Positions 291 to 301 match the Last loop motif motif; it reads ESIGNFSPFFG. Residues 304-324 form a helical membrane-spanning segment; the sequence is FLNILLVILQLLHVFWSWLIL. Residues 325–393 lie on the Cytoplasmic side of the membrane; that stretch reads CMIYSFIKKG…RMVNRHTPAT (69 aa). 3 positions are modified to phosphoserine: S342, S349, and S350. The span at 346–356 shows a compositional bias: acidic residues; it reads ELDSSDGEAAE. The interval 346-393 is disordered; it reads ELDSSDGEAAEECPQMKNGAAQRPGAAPTDGPRSRAAGRMVNRHTPAT.

In terms of processing, phosphorylated at the C-terminus by CK2.

It localises to the endoplasmic reticulum membrane. It catalyses the reaction sphinganine + octadecanoyl-CoA = N-(octadecanoyl)-sphinganine + CoA + H(+). The enzyme catalyses eicosanoyl-CoA + sphinganine = N-eicosanoylsphinganine + CoA + H(+). The catalysed reaction is docosanoyl-CoA + sphinganine = N-docosanoylsphinganine + CoA + H(+). It carries out the reaction tetracosanoyl-CoA + sphinganine = N-tetracosanoylsphinganine + CoA + H(+). It catalyses the reaction hexacosanoyl-CoA + sphinganine = N-hexacosanoylsphinganine + CoA + H(+). The enzyme catalyses a fatty acyl-CoA + sphing-4-enine = an N-acylsphing-4-enine + CoA + H(+). The catalysed reaction is sphing-4-enine + octadecanoyl-CoA = N-octadecanoylsphing-4-enine + CoA + H(+). It carries out the reaction hexadecasphinganine + octadecanoyl-CoA = N-octadecanoylhexadecasphinganine + CoA + H(+). Its pathway is lipid metabolism; sphingolipid metabolism. Functionally, ceramide synthase that catalyzes formation of ceramide from sphinganine and acyl-CoA substrates, with high selectivity toward long and very-long chains (C18:0-C22:0) as acyl donor. The chain is Ceramide synthase 4 from Bos taurus (Bovine).